We begin with the raw amino-acid sequence, 507 residues long: ATP synthase subunit alpha, chloroplastic (507 aa).

G170–T177 is a binding site for ATP.

Belongs to the ATPase alpha/beta chains family. F-type ATPases have 2 components, CF(1) - the catalytic core - and CF(0) - the membrane proton channel. CF(1) has five subunits: alpha(3), beta(3), gamma(1), delta(1), epsilon(1). CF(0) has four main subunits: a, b, b' and c.

The protein localises to the plastid. Its subcellular location is the chloroplast thylakoid membrane. The enzyme catalyses ATP + H2O + 4 H(+)(in) = ADP + phosphate + 5 H(+)(out). Its function is as follows. Produces ATP from ADP in the presence of a proton gradient across the membrane. The alpha chain is a regulatory subunit. This chain is ATP synthase subunit alpha, chloroplastic, found in Marchantia polymorpha (Common liverwort).